Here is a 321-residue protein sequence, read N- to C-terminus: Lipoyl synthase (321 aa).

Cys-68, Cys-73, Cys-79, Cys-94, Cys-98, Cys-101, and Ser-308 together coordinate [4Fe-4S] cluster. Residues 80 to 297 (FNHGTATFMI…KAEAMAMGFT (218 aa)) enclose the Radical SAM core domain.

The protein belongs to the radical SAM superfamily. Lipoyl synthase family. [4Fe-4S] cluster serves as cofactor.

It is found in the cytoplasm. The enzyme catalyses [[Fe-S] cluster scaffold protein carrying a second [4Fe-4S](2+) cluster] + N(6)-octanoyl-L-lysyl-[protein] + 2 oxidized [2Fe-2S]-[ferredoxin] + 2 S-adenosyl-L-methionine + 4 H(+) = [[Fe-S] cluster scaffold protein] + N(6)-[(R)-dihydrolipoyl]-L-lysyl-[protein] + 4 Fe(3+) + 2 hydrogen sulfide + 2 5'-deoxyadenosine + 2 L-methionine + 2 reduced [2Fe-2S]-[ferredoxin]. It functions in the pathway protein modification; protein lipoylation via endogenous pathway; protein N(6)-(lipoyl)lysine from octanoyl-[acyl-carrier-protein]: step 2/2. Its function is as follows. Catalyzes the radical-mediated insertion of two sulfur atoms into the C-6 and C-8 positions of the octanoyl moiety bound to the lipoyl domains of lipoate-dependent enzymes, thereby converting the octanoylated domains into lipoylated derivatives. The protein is Lipoyl synthase of Enterobacter sp. (strain 638).